The sequence spans 299 residues: Protease HtpX homolog (299 aa).

Helical transmembrane passes span 15 to 35 and 39 to 59; these read ILLLVFFLLLALVGYAVGYLF and GLGGLVIALIIGFIYALSMIF. H143 is a Zn(2+) binding site. E144 is an active-site residue. Residue H147 coordinates Zn(2+). A run of 2 helical transmembrane segments spans residues 158-178 and 198-218; these read IAVALASAITMLSSMAGRMMW and IIMLVVSLLAIVLAPLAATLV. E227 lines the Zn(2+) pocket.

It belongs to the peptidase M48B family. It depends on Zn(2+) as a cofactor.

It localises to the cell membrane. The sequence is that of Protease HtpX homolog from Streptococcus pneumoniae (strain Taiwan19F-14).